Here is a 223-residue protein sequence, read N- to C-terminus: Deoxyribose-phosphate aldolase (223 aa).

Catalysis depends on Asp-92, which acts as the Proton donor/acceptor. Residue Lys-154 is the Schiff-base intermediate with acetaldehyde of the active site. The active-site Proton donor/acceptor is the Lys-182.

The protein belongs to the DeoC/FbaB aldolase family. DeoC type 1 subfamily.

It localises to the cytoplasm. It carries out the reaction 2-deoxy-D-ribose 5-phosphate = D-glyceraldehyde 3-phosphate + acetaldehyde. It functions in the pathway carbohydrate degradation; 2-deoxy-D-ribose 1-phosphate degradation; D-glyceraldehyde 3-phosphate and acetaldehyde from 2-deoxy-alpha-D-ribose 1-phosphate: step 2/2. Its function is as follows. Catalyzes a reversible aldol reaction between acetaldehyde and D-glyceraldehyde 3-phosphate to generate 2-deoxy-D-ribose 5-phosphate. The protein is Deoxyribose-phosphate aldolase of Haemophilus influenzae (strain 86-028NP).